The primary structure comprises 756 residues: Multicystatin (756 aa).

8 Cystatin domains span residues Ile-3 to Thr-96, Met-97 to Ala-191, Lys-192 to Ala-285, Lys-286 to Lys-380, Lys-381 to Ala-474, Lys-475 to Ala-568, Ile-569 to Ala-662, and Lys-663 to Lys-756. 8 short sequence motifs (secondary area of contact) span residues Gln-48–Gly-52, Gln-142–Gly-146, Gln-237–Gly-241, Gln-331–Gly-335, Gln-426–Gly-430, Gln-520–Gly-524, Gln-614–Gly-618, and Gln-708–Gly-712.

This sequence belongs to the cystatin family. Phytocystatin subfamily. Expressed abundantly in tuber and leaf.

In terms of biological role, probably has a role in the plant's defense system. This Solanum tuberosum (Potato) protein is Multicystatin.